The chain runs to 306 residues: UDP-3-O-acyl-N-acetylglucosamine deacetylase (306 aa).

Residues histidine 79, histidine 238, and aspartate 242 each coordinate Zn(2+). The Proton donor role is filled by histidine 265.

This sequence belongs to the LpxC family. It depends on Zn(2+) as a cofactor.

The enzyme catalyses a UDP-3-O-[(3R)-3-hydroxyacyl]-N-acetyl-alpha-D-glucosamine + H2O = a UDP-3-O-[(3R)-3-hydroxyacyl]-alpha-D-glucosamine + acetate. It functions in the pathway glycolipid biosynthesis; lipid IV(A) biosynthesis; lipid IV(A) from (3R)-3-hydroxytetradecanoyl-[acyl-carrier-protein] and UDP-N-acetyl-alpha-D-glucosamine: step 2/6. Functionally, catalyzes the hydrolysis of UDP-3-O-myristoyl-N-acetylglucosamine to form UDP-3-O-myristoylglucosamine and acetate, the committed step in lipid A biosynthesis. The protein is UDP-3-O-acyl-N-acetylglucosamine deacetylase of Shewanella sp. (strain ANA-3).